The chain runs to 511 residues: Maturase K (511 aa).

Belongs to the intron maturase 2 family. MatK subfamily.

The protein resides in the plastid. It is found in the chloroplast. Usually encoded in the trnK tRNA gene intron. Probably assists in splicing its own and other chloroplast group II introns. The protein is Maturase K of Triticum aestivum (Wheat).